Consider the following 262-residue polypeptide: F-actin-capping protein subunit alpha (262 aa).

Belongs to the F-actin-capping protein alpha subunit family. As to quaternary structure, heterodimer of an alpha and a beta subunit.

It is found in the cytoplasm. Its subcellular location is the cytoskeleton. Its function is as follows. F-actin-capping proteins bind in a Ca(2+)-independent manner to the fast growing ends of actin filaments (barbed end) thereby blocking the exchange of subunits at these ends. Unlike other capping proteins (such as gelsolin and severin), these proteins do not sever actin filaments. This is F-actin-capping protein subunit alpha (CAP1) from Yarrowia lipolytica (strain CLIB 122 / E 150) (Yeast).